Here is a 1589-residue protein sequence, read N- to C-terminus: Paternally-expressed gene 3 protein (1589 aa).

In terms of domain architecture, SCAN box spans 46–128 (HQRFRNLIYV…TLLENYKEMY (83 aa)). Disordered regions lie at residues 128–230 (YQPE…ESYQ), 266–306 (DGHS…RRGI), and 319–349 (KFIKDVSRSSKSGRARESSDRSQRFPRMSDD). The span at 129–142 (QPEDDNNSDVTSDD) shows a compositional bias: acidic residues. Basic and acidic residues-rich tracts occupy residues 143-152 (DMTRNRRESS), 161-182 (SGDRDWDRRGRSRDMEPRDRWS), 206-225 (FEMDRDDDRDSRAYESRSQD), and 295-306 (PEAKKSTHRRGI). 3 consecutive C2H2-type zinc fingers follow at residues 454 to 476 (YVCDECGRSFSVISEFVEHQIMH), 507 to 529 (FECKDCGETFNKSAALAEHRKIH), and 565 to 587 (YECRVCKETFLHSSALIEHQKIH). The segment covering 588–607 (FGDDKDNEREHERERERGET) has biased composition (basic and acidic residues). Residues 588 to 610 (FGDDKDNEREHERERERGETFRP) are disordered. The C2H2-type 4 zinc-finger motif lies at 627 to 649 (YECKVCGETFLHSSSLKEHQKIH). The interval 838-930 (LVASKPPRSH…EFSVPSSNVR (93 aa)) is disordered. The span at 868–881 (LNDKRQKIPARENP) shows a compositional bias: basic and acidic residues. Residues 969-991 (YECQECGECFAHSSDLTEHQKIH) form a C2H2-type 5 zinc finger. A disordered region spans residues 1056 to 1104 (EKSHGEESQGENTDGEETHSEETHGQETIEDPVIQSSDMEDPQKDDPDD). Over residues 1071–1082 (EETHSEETHGQE) the composition is skewed to basic and acidic residues. 5 consecutive C2H2-type zinc fingers follow at residues 1107–1129 (YECEDCGLGFVDLTDLTDHQKVH), 1163–1185 (YECPKCGESFIHSSFLFEHQRIH), 1225–1247 (IRCLLCGQGFIHSSALNEHMRLH), 1282–1304 (FECAVCGESFVNPAELADHVTVH), and 1332–1354 (YECKDCGKSFIHSTVLTKHKELH). A compositionally biased stretch (acidic residues) spans 1396 to 1416 (AEPEVEAAEPEVEAAEPEVEA). A disordered region spans residues 1396–1496 (AEPEVEAAEP…GIEDPEEGED (101 aa)). Repeat copies occupy residues 1398–1404 (PEVEAAE), 1405–1411 (PEVEAAE), 1412–1418 (PEVEAAE), 1419–1423 (PNGEA), 1426–1430 (PDGEA), 1433–1437 (PIGEA), and 1440–1444 (PNGEA). The 3 X 7 AA repeat of P-E-V-E-A-A-E stretch occupies residues 1398–1418 (PEVEAAEPEVEAAEPEVEAAE). Residues 1419-1444 (PNGEAEGPDGEAAEPIGEAGQPNGEA) are 4 X 5 AA repeat of P-X-G-E-A. Acidic residues-rich tracts occupy residues 1450–1467 (DADEPDGAGIEDPEERAE) and 1476–1496 (PEGDADEPDGVGIEDPEEGED). C2H2-type zinc fingers lie at residues 1506 to 1528 (YDCHECTETFTSSTAFGEHLKTH) and 1565 to 1587 (FKCDVCGQLFNDRLSLARHQNTH).

It belongs to the krueppel C2H2-type zinc-finger protein family. Homodimer. Interacts with SIAH1A and SIAH2. Interacts with TRAF2.

It localises to the nucleus. The protein resides in the cytoplasm. Its function is as follows. Induces apoptosis in cooperation with SIAH1A. Acts as a mediator between p53/TP53 and BAX in a neuronal death pathway that is activated by DNA damage. Acts synergistically with TRAF2 and inhibits TNF induced apoptosis through activation of NF-kappa-B. The sequence is that of Paternally-expressed gene 3 protein (PEG3) from Gorilla gorilla gorilla (Western lowland gorilla).